The chain runs to 569 residues: Probable diguanylate cyclase DgcQ (569 aa).

Transmembrane regions (helical) follow at residues 25 to 45 (LGPGHVVNLCFIVVLLFSTLL) and 365 to 385 (IALTLLWALFTTMLLISWYVI). The GGDEF domain occupies 433-568 (HPFSVIQVDL…GRNRVCASDN (136 aa)). Residue aspartate 441 participates in Mg(2+) binding. Positions 449, 454, and 458 each coordinate substrate. Residue glutamate 484 participates in Mg(2+) binding. The active-site Proton acceptor is glutamate 484.

As to quaternary structure, homodimer. Mg(2+) serves as cofactor.

It is found in the cell inner membrane. It catalyses the reaction 2 GTP = 3',3'-c-di-GMP + 2 diphosphate. Its pathway is glycan metabolism; bacterial cellulose biosynthesis. It participates in purine metabolism; 3',5'-cyclic di-GMP biosynthesis. Functionally, catalyzes the synthesis of cyclic-di-GMP (c-di-GMP) via the condensation of 2 GTP molecules. Cyclic-di-GMP is a second messenger which controls cell surface-associated traits in bacteria. Involved in the regulation of cellulose production. The chain is Probable diguanylate cyclase DgcQ from Shigella sonnei (strain Ss046).